We begin with the raw amino-acid sequence, 171 residues long: Lipoprotein signal peptidase (171 aa).

The next 3 membrane-spanning stretches (helical) occupy residues 8–28 (SFLW…YIVV), 64–84 (WQQY…VYFL), and 99–119 (ALII…GFVV). Catalysis depends on residues Asp-120 and Asp-138. A helical membrane pass occupies residues 133–153 (VFNIADIAICIGAGLLVLDAF).

Belongs to the peptidase A8 family.

It is found in the cell inner membrane. The catalysed reaction is Release of signal peptides from bacterial membrane prolipoproteins. Hydrolyzes -Xaa-Yaa-Zaa-|-(S,diacylglyceryl)Cys-, in which Xaa is hydrophobic (preferably Leu), and Yaa (Ala or Ser) and Zaa (Gly or Ala) have small, neutral side chains.. The protein operates within protein modification; lipoprotein biosynthesis (signal peptide cleavage). In terms of biological role, this protein specifically catalyzes the removal of signal peptides from prolipoproteins. This Haemophilus influenzae (strain ATCC 51907 / DSM 11121 / KW20 / Rd) protein is Lipoprotein signal peptidase.